Reading from the N-terminus, the 126-residue chain is Aspartate 1-decarboxylase (126 aa).

Ser25 (schiff-base intermediate with substrate; via pyruvic acid) is an active-site residue. Ser25 carries the pyruvic acid (Ser) modification. Thr57 contributes to the substrate binding site. Residue Tyr58 is the Proton donor of the active site. Position 73-75 (73-75 (GGA)) interacts with substrate.

Belongs to the PanD family. As to quaternary structure, heterooctamer of four alpha and four beta subunits. It depends on pyruvate as a cofactor. Post-translationally, is synthesized initially as an inactive proenzyme, which is activated by self-cleavage at a specific serine bond to produce a beta-subunit with a hydroxyl group at its C-terminus and an alpha-subunit with a pyruvoyl group at its N-terminus.

It is found in the cytoplasm. It catalyses the reaction L-aspartate + H(+) = beta-alanine + CO2. It participates in cofactor biosynthesis; (R)-pantothenate biosynthesis; beta-alanine from L-aspartate: step 1/1. Its function is as follows. Catalyzes the pyruvoyl-dependent decarboxylation of aspartate to produce beta-alanine. The polypeptide is Aspartate 1-decarboxylase (Stenotrophomonas maltophilia (strain R551-3)).